A 235-amino-acid polypeptide reads, in one-letter code: uncharacterized protein (235 aa).

The interval 37-235 (QNAKLNDGDN…GGEDYPWPWN (199 aa)) is disordered. The segment covering 72 to 89 (GSDDYSDVEDGGAEEGDS) has biased composition (acidic residues). Residues 112–124 (TSSTSTASTSSGS) are compositionally biased toward low complexity. A compositionally biased stretch (basic and acidic residues) spans 152 to 170 (RRPELDLSPKIENRSDSSS). Residues 185 to 202 (NKDNPSRGQGNENPSASD) show a composition bias toward polar residues.

The protein belongs to the herpesviridae BKRF4 family.

This is an uncharacterized protein from Alcelaphine herpesvirus 1 (strain C500) (AlHV-1).